Here is a 360-residue protein sequence, read N- to C-terminus: sn-glycerol-3-phosphate import ATP-binding protein UgpC (360 aa).

The region spanning 4–235 is the ABC transporter domain; it reads LSLKGVRKSY…PATTFVASFI (232 aa). 37 to 44 lines the ATP pocket; the sequence is GPSGCGKS.

The protein belongs to the ABC transporter superfamily. sn-glycerol-3-phosphate importer (TC 3.A.1.1.3) family. The complex is composed of two ATP-binding proteins (UgpC), two transmembrane proteins (UgpA and UgpE) and a solute-binding protein (UgpB).

Its subcellular location is the cell inner membrane. It carries out the reaction sn-glycerol 3-phosphate(out) + ATP + H2O = sn-glycerol 3-phosphate(in) + ADP + phosphate + H(+). Its function is as follows. Part of the ABC transporter complex UgpBAEC involved in sn-glycerol-3-phosphate (G3P) import. Responsible for energy coupling to the transport system. This is sn-glycerol-3-phosphate import ATP-binding protein UgpC from Burkholderia pseudomallei (strain K96243).